The chain runs to 221 residues: Orotate phosphoribosyltransferase (221 aa).

Residue Lys26 coordinates 5-phospho-alpha-D-ribose 1-diphosphate. 34 to 35 (FF) contacts orotate. 5-phospho-alpha-D-ribose 1-diphosphate-binding positions include 72–73 (YK), Arg99, Lys100, Lys103, His105, and 124–132 (DDVITAGTA). Orotate is bound by residues Thr128 and Arg156.

This sequence belongs to the purine/pyrimidine phosphoribosyltransferase family. PyrE subfamily. As to quaternary structure, homodimer. It depends on Mg(2+) as a cofactor.

It carries out the reaction orotidine 5'-phosphate + diphosphate = orotate + 5-phospho-alpha-D-ribose 1-diphosphate. The protein operates within pyrimidine metabolism; UMP biosynthesis via de novo pathway; UMP from orotate: step 1/2. Its function is as follows. Catalyzes the transfer of a ribosyl phosphate group from 5-phosphoribose 1-diphosphate to orotate, leading to the formation of orotidine monophosphate (OMP). This is Orotate phosphoribosyltransferase from Colwellia psychrerythraea (strain 34H / ATCC BAA-681) (Vibrio psychroerythus).